The following is a 694-amino-acid chain: Elongation factor G (694 aa).

The 280-residue stretch at 9-288 (DAIRNIGIMA…VIVKWLPSPL (280 aa)) folds into the tr-type G domain. GTP contacts are provided by residues 18–25 (AHIDAGKT), 82–86 (DTPGH), and 136–139 (NKMD).

The protein belongs to the TRAFAC class translation factor GTPase superfamily. Classic translation factor GTPase family. EF-G/EF-2 subfamily.

The protein localises to the cytoplasm. In terms of biological role, catalyzes the GTP-dependent ribosomal translocation step during translation elongation. During this step, the ribosome changes from the pre-translocational (PRE) to the post-translocational (POST) state as the newly formed A-site-bound peptidyl-tRNA and P-site-bound deacylated tRNA move to the P and E sites, respectively. Catalyzes the coordinated movement of the two tRNA molecules, the mRNA and conformational changes in the ribosome. This Chlamydia trachomatis serovar L2 (strain ATCC VR-902B / DSM 19102 / 434/Bu) protein is Elongation factor G.